A 1567-amino-acid chain; its full sequence is ABC multidrug transporter MDR1 (1567 aa).

A compositionally biased stretch (pro residues) spans 1–11; sequence MASQPPQPPSG. The disordered stretch occupies residues 1–37; that stretch reads MASQPPQPPSGQPDTQYEEYQSEVITETTNRPTPAAD. Residues 22-32 show a composition bias toward polar residues; that stretch reads SEVITETTNRP. 3 N-linked (GlcNAc...) asparagine glycosylation sites follow: N149, N157, and N356. One can recognise an ABC transporter 1 domain in the interval 167-432; the sequence is VQYQDTFLSP…FEEMGWYCPP (266 aa). 6 helical membrane passes run 543 to 563, 571 to 591, 636 to 656, 661 to 681, 691 to 711, and 798 to 818; these read STIA…SLFF, GFFA…LMSI, IPIK…LGGL, AKFF…SAIF, IPQA…YTGF, and LGIL…VSEL. N-linked (GlcNAc...) asparagine glycans are attached at residues N819, N895, and N912. Positions 891–1134 constitute an ABC transporter 2 domain; that stretch reads FTWRNVTYDI…LLNYFETHGA (244 aa). 927-934 is a binding site for ATP; it reads GVSGAGKT. Positions 1172–1202 are disordered; the sequence is ESRHVQQELDRIQSETSKRNEGHGQSAEKEP. A helical transmembrane segment spans residues 1231–1251; that stretch reads IWGKLLLGLTSALFIGFSFFL. Residue N1253 is glycosylated (N-linked (GlcNAc...) asparagine). 5 consecutive transmembrane segments (helical) span residues 1257 to 1277, 1305 to 1325, 1345 to 1365, 1372 to 1392, and 1498 to 1518; these read AGLQ…SSLV, VFLL…GIIA, ILLL…QMII, ETAG…NGVL, and GIGW…YYLI.

Belongs to the ABC transporter superfamily. ABCG family. PDR (TC 3.A.1.205) subfamily.

It localises to the cell membrane. It catalyses the reaction voriconazole(in) + ATP + H2O = voriconazole(out) + ADP + phosphate + H(+). The catalysed reaction is fluconazole(in) + ATP + H2O = fluconazole(out) + ADP + phosphate + H(+). The enzyme catalyses (R)-miconazole(in) + ATP + H2O = (R)-miconazole(out) + ADP + phosphate + H(+). It carries out the reaction (S)-miconazole(in) + ATP + H2O = (S)-miconazole(out) + ADP + phosphate + H(+). Functionally, pleiotropic ABC efflux transporter that may be involved in the modulation susceptibility to a wide range of unrelated cytotoxic compounds. This is ABC multidrug transporter MDR1 from Trichophyton tonsurans (strain CBS 112818) (Scalp ringworm fungus).